Here is a 274-residue protein sequence, read N- to C-terminus: Putative pyruvate, phosphate dikinase regulatory protein (274 aa).

Position 151-158 (151-158 (GVSRTSKT)) interacts with ADP.

This sequence belongs to the pyruvate, phosphate/water dikinase regulatory protein family. PDRP subfamily.

The enzyme catalyses N(tele)-phospho-L-histidyl/L-threonyl-[pyruvate, phosphate dikinase] + ADP = N(tele)-phospho-L-histidyl/O-phospho-L-threonyl-[pyruvate, phosphate dikinase] + AMP + H(+). It catalyses the reaction N(tele)-phospho-L-histidyl/O-phospho-L-threonyl-[pyruvate, phosphate dikinase] + phosphate + H(+) = N(tele)-phospho-L-histidyl/L-threonyl-[pyruvate, phosphate dikinase] + diphosphate. Functionally, bifunctional serine/threonine kinase and phosphorylase involved in the regulation of the pyruvate, phosphate dikinase (PPDK) by catalyzing its phosphorylation/dephosphorylation. This is Putative pyruvate, phosphate dikinase regulatory protein from Pelagibacter ubique (strain HTCC1062).